A 215-amino-acid polypeptide reads, in one-letter code: Octanoyltransferase (215 aa).

The BPL/LPL catalytic domain maps to Pro-35–Gly-210. Residues Arg-74 to His-81, Ser-141 to Gly-143, and Gly-154 to Ala-156 contribute to the substrate site. The Acyl-thioester intermediate role is filled by Cys-172.

It belongs to the LipB family.

Its subcellular location is the cytoplasm. It catalyses the reaction octanoyl-[ACP] + L-lysyl-[protein] = N(6)-octanoyl-L-lysyl-[protein] + holo-[ACP] + H(+). It functions in the pathway protein modification; protein lipoylation via endogenous pathway; protein N(6)-(lipoyl)lysine from octanoyl-[acyl-carrier-protein]: step 1/2. In terms of biological role, catalyzes the transfer of endogenously produced octanoic acid from octanoyl-acyl-carrier-protein onto the lipoyl domains of lipoate-dependent enzymes. Lipoyl-ACP can also act as a substrate although octanoyl-ACP is likely to be the physiological substrate. The protein is Octanoyltransferase of Alkalilimnicola ehrlichii (strain ATCC BAA-1101 / DSM 17681 / MLHE-1).